The following is a 302-amino-acid chain: Enoyl-CoA delta isomerase 1, mitochondrial (302 aa).

Residues 1–41 constitute a mitochondrion transit peptide; it reads MALVASVRVPARVLLRAGARLPGAALGRTERAAGGGDGARR. At Lys61 the chain carries N6-acetyllysine; alternate. The residue at position 61 (Lys61) is an N6-succinyllysine; alternate. Lys84 is subject to N6-succinyllysine. Lys89 bears the N6-acetyllysine mark. Substrate contacts are provided by residues 106–110, Gly153, and Asn177; that span reads AGLDL. Lys283 is subject to N6-acetyllysine; alternate. Residue Lys283 is modified to N6-succinyllysine; alternate. The residue at position 288 (Lys288) is an N6-succinyllysine.

Belongs to the enoyl-CoA hydratase/isomerase family. Homotrimer. In terms of tissue distribution, expressed in liver (at protein level).

Its subcellular location is the mitochondrion matrix. It catalyses the reaction a (3Z)-enoyl-CoA = a 4-saturated (2E)-enoyl-CoA. The enzyme catalyses a (3E)-enoyl-CoA = a 4-saturated (2E)-enoyl-CoA. It carries out the reaction (3Z)-octenoyl-CoA = (2E)-octenoyl-CoA. The catalysed reaction is (2E)-tetradecenoyl-CoA = (3Z)-tetradecenoyl-CoA. It catalyses the reaction (3Z)-dodecenoyl-CoA = (2E)-dodecenoyl-CoA. The enzyme catalyses (3Z)-hexenoyl-CoA = (2E)-hexenoyl-CoA. It carries out the reaction (3Z)-decenoyl-CoA = (2E)-decenoyl-CoA. Its pathway is lipid metabolism; fatty acid beta-oxidation. Its function is as follows. Key enzyme of fatty acid beta-oxidation. Able to isomerize both 3-cis (3Z) and 3-trans (3E) double bonds into the 2-trans (2E) form in a range of enoyl-CoA species, with a preference for (3Z)-enoyl-CoAs over (3E)-enoyl-CoAs. The catalytic efficiency of this enzyme is not affected by the fatty acyl chain length. In Homo sapiens (Human), this protein is Enoyl-CoA delta isomerase 1, mitochondrial (ECI1).